The chain runs to 352 residues: Maleylacetate reductase (352 aa).

The protein belongs to the iron-containing alcohol dehydrogenase family.

The catalysed reaction is 3-oxoadipate + NAD(+) = maleylacetate + NADH + H(+). The enzyme catalyses 3-oxoadipate + NADP(+) = maleylacetate + NADPH + H(+). Its pathway is aromatic compound metabolism; 3-chlorocatechol degradation. This is Maleylacetate reductase (tcbF) from Pseudomonas sp. (strain P51).